Here is a 235-residue protein sequence, read N- to C-terminus: Vacuolar protein sorting-associated protein 60.2 (235 aa).

The tract at residues 1-30 is disordered; it reads MKRIFGAKNNKEPPPSIQDASDRINKRGDS. Basic and acidic residues predominate over residues 20–30; it reads ASDRINKRGDS. The stretch at 99 to 148 forms a coiled coil; that stretch reads LKDAQQTMTALKSANKELKGMMKTVKIQDIDNLQDDMMDLMDESSEIQET. The tract at residues 174-235 is disordered; that stretch reads DMGNETEADG…PAVPRASLRG (62 aa).

The protein belongs to the SNF7 family.

It is found in the endosome. It localises to the multivesicular body membrane. Its function is as follows. Probable peripherally associated component of the endosomal sorting required for transport complex III (ESCRT-III) which is involved in multivesicular bodies (MVBs) formation and sorting of endosomal cargo proteins into MVBs. This Arabidopsis thaliana (Mouse-ear cress) protein is Vacuolar protein sorting-associated protein 60.2.